A 774-amino-acid chain; its full sequence is Transcription factor MBS1 (774 aa).

Positions 37-143 (EITFYDSGVP…YVPTSVSPPP (107 aa)) constitute an HTH APSES-type domain. Positions 68–89 (ATQILKVAGFDKPQRTRVLERE) form a DNA-binding region, H-T-H motif. Disordered regions lie at residues 135–180 (VPTS…SAAA) and 209–229 (RVSL…VASV). Over residues 155-165 (ARRDKEKETGR) the composition is skewed to basic and acidic residues. Polar residues predominate over residues 166–176 (TKATPSRTGPT). ANK repeat units follow at residues 348-377 (DGHT…SIFA) and 467-496 (EGET…NPKI). The disordered stretch occupies residues 752–774 (EEENDNQVYNTSAGESGPSSWVQ). Over residues 757–774 (NQVYNTSAGESGPSSWVQ) the composition is skewed to polar residues.

The protein resides in the nucleus. Transcription factor that positively regulates ergosterol biosynthesis and thereby affects polyene and azole drug susceptibility. Plays a role in maintenance of membrane stability and osmotic stress response. Involved in genotoxic and oxidative stress responses. Also promotes production of melanin and capsule and thereby is required for full virulence. This chain is Transcription factor MBS1, found in Cryptococcus neoformans var. grubii serotype A (strain H99 / ATCC 208821 / CBS 10515 / FGSC 9487) (Filobasidiella neoformans var. grubii).